The following is a 354-amino-acid chain: Uroporphyrinogen decarboxylase (354 aa).

Substrate-binding positions include 27 to 31 (RQAGR), aspartate 77, tyrosine 154, threonine 209, and histidine 327.

Belongs to the uroporphyrinogen decarboxylase family. Homodimer.

The protein localises to the cytoplasm. The catalysed reaction is uroporphyrinogen III + 4 H(+) = coproporphyrinogen III + 4 CO2. It functions in the pathway porphyrin-containing compound metabolism; protoporphyrin-IX biosynthesis; coproporphyrinogen-III from 5-aminolevulinate: step 4/4. Its function is as follows. Catalyzes the decarboxylation of four acetate groups of uroporphyrinogen-III to yield coproporphyrinogen-III. The sequence is that of Uroporphyrinogen decarboxylase from Cronobacter sakazakii (strain ATCC BAA-894) (Enterobacter sakazakii).